Consider the following 1014-residue polypeptide: Isoleucine--tRNA ligase (1014 aa).

The 'HIGH' region motif lies at 48 to 58 (PTANGRPGIHH). The 'KMSKS' region signature appears at 628–632 (KMSKS). Lysine 631 serves as a coordination point for ATP.

This sequence belongs to the class-I aminoacyl-tRNA synthetase family. IleS type 2 subfamily. In terms of assembly, monomer. The cofactor is Zn(2+).

It localises to the cytoplasm. The catalysed reaction is tRNA(Ile) + L-isoleucine + ATP = L-isoleucyl-tRNA(Ile) + AMP + diphosphate. Functionally, catalyzes the attachment of isoleucine to tRNA(Ile). As IleRS can inadvertently accommodate and process structurally similar amino acids such as valine, to avoid such errors it has two additional distinct tRNA(Ile)-dependent editing activities. One activity is designated as 'pretransfer' editing and involves the hydrolysis of activated Val-AMP. The other activity is designated 'posttransfer' editing and involves deacylation of mischarged Val-tRNA(Ile). This Dehalococcoides mccartyi (strain CBDB1) protein is Isoleucine--tRNA ligase.